Consider the following 388-residue polypeptide: F-box/kelch-repeat protein At3g17530 (388 aa).

Residues 1–50 form the F-box domain; sequence MMISDLPHDLESEILSRVPAKSLAKWKTTCKRWYALFRDPSFVKKNFDKA. 2 Kelch repeats span residues 163-208 and 336-383; these read CCYY…VSLK and RIYI…AEEN.

This Arabidopsis thaliana (Mouse-ear cress) protein is F-box/kelch-repeat protein At3g17530.